The following is a 166-amino-acid chain: Large ribosomal subunit protein bL9 (166 aa).

It belongs to the bacterial ribosomal protein bL9 family.

Its function is as follows. Binds to the 23S rRNA. The polypeptide is Large ribosomal subunit protein bL9 (Brachyspira hyodysenteriae (strain ATCC 49526 / WA1)).